Reading from the N-terminus, the 153-residue chain is Actin-related protein 2/3 complex subunit 5-like protein (153 aa).

Residue serine 64 is modified to Phosphoserine.

Belongs to the ARPC5 family. May be a component of the Arp2/3 complex in which it may replace ARPC5.

The protein resides in the cytoplasm. It localises to the cytoskeleton. In terms of biological role, may function as component of the Arp2/3 complex which is involved in regulation of actin polymerization and together with an activating nucleation-promoting factor (NPF) mediates the formation of branched actin networks. This chain is Actin-related protein 2/3 complex subunit 5-like protein (Arpc5l), found in Rattus norvegicus (Rat).